We begin with the raw amino-acid sequence, 351 residues long: Protein-glutamate methylesterase/protein-glutamine glutaminase 2 (351 aa).

A Response regulatory domain is found at 5 to 122 (RVICVDDSAL…RDGLLDYSEL (118 aa)). The residue at position 56 (D56) is a 4-aspartylphosphate. In terms of domain architecture, CheB-type methylesterase spans 154 to 341 (LNSSEKLVIL…PLPAMSERIL (188 aa)). Active-site residues include S166, H192, and D289.

Belongs to the CheB family. In terms of processing, phosphorylated by CheA. Phosphorylation of the N-terminal regulatory domain activates the methylesterase activity.

The protein localises to the cytoplasm. The catalysed reaction is [protein]-L-glutamate 5-O-methyl ester + H2O = L-glutamyl-[protein] + methanol + H(+). The enzyme catalyses L-glutaminyl-[protein] + H2O = L-glutamyl-[protein] + NH4(+). Its function is as follows. Involved in chemotaxis. Part of a chemotaxis signal transduction system that modulates chemotaxis in response to various stimuli. Catalyzes the demethylation of specific methylglutamate residues introduced into the chemoreceptors (methyl-accepting chemotaxis proteins or MCP) by CheR. Also mediates the irreversible deamidation of specific glutamine residues to glutamic acid. In Bordetella avium (strain 197N), this protein is Protein-glutamate methylesterase/protein-glutamine glutaminase 2.